The primary structure comprises 3103 residues: Extracellular matrix protein 3 (3103 aa).

An N-terminal signal peptide occupies residues M1–A19. At Q20–N3047 the chain is on the extracellular side. CSPG repeat units follow at residues P289–V388, A411–T499, A520–V630, P656–Q762, Q784–T875, L901–S993, A1022–T1124, E1145–T1238, T1259–T1357, V1378–T1470, K1490–T1579, and A1613–R1710. 2 N-linked (GlcNAc...) asparagine glycosylation sites follow: N330 and N453. Residues N989, N1024, N1042, N1207, N1294, N1321, and N1327 are each glycosylated (N-linked (GlcNAc...) asparagine). N-linked (GlcNAc...) asparagine glycans are attached at residues N1542, N1674, N1679, N1725, and N1739. Calx-beta domains follow at residues L1717 to H1816, A1829 to S1942, N1956 to N2062, and I2077 to G2179. N-linked (GlcNAc...) asparagine glycans are attached at residues N2080, N2195, N2274, N2385, and N2932. The region spanning T2197–T2302 is the Calx-beta 5 domain. The tract at residues S2983–A3013 is disordered. A helical membrane pass occupies residues V3048–I3068. Residues G3069–V3103 are Cytoplasmic-facing.

The protein belongs to the FRAS1 family. As to expression, component of extracellular matrix fibers that interact with PMC filopodia during gastrulation (at protein level).

Its subcellular location is the cell membrane. In terms of biological role, extracellular matrix protein that may serve as substrate for the migratory primary mesenchyme cells (PMCs), the interaction possibly providing guidance information to migrating PMCs. This is Extracellular matrix protein 3 (ECM3) from Lytechinus variegatus (Green sea urchin).